The chain runs to 213 residues: 3-isopropylmalate dehydratase small subunit (213 aa).

The protein belongs to the LeuD family. LeuD type 1 subfamily. As to quaternary structure, heterodimer of LeuC and LeuD.

The enzyme catalyses (2R,3S)-3-isopropylmalate = (2S)-2-isopropylmalate. It participates in amino-acid biosynthesis; L-leucine biosynthesis; L-leucine from 3-methyl-2-oxobutanoate: step 2/4. Its function is as follows. Catalyzes the isomerization between 2-isopropylmalate and 3-isopropylmalate, via the formation of 2-isopropylmaleate. The sequence is that of 3-isopropylmalate dehydratase small subunit from Neisseria meningitidis serogroup A / serotype 4A (strain DSM 15465 / Z2491).